The primary structure comprises 200 residues: DNA-binding protein HupB (200 aa).

Positions Met1 to Ala90 are bacterial histone-like domain. An N6-acetyllysine mark is found at Lys3, Lys72, Lys86, Lys103, Lys137, Lys144, and Lys156. The degenerate repeats region stretch occupies residues Ala101–Lys200. The segment at Ala179–Lys200 is disordered.

It belongs to the bacterial histone-like protein family. Long actinobacterial subfamily. Binds to human laminin-2. In terms of processing, may also be methylated and possibly phosphorylated in vivo.

It is found in the cytoplasm. The protein resides in the nucleoid. Its subcellular location is the secreted. The protein localises to the cell wall. It localises to the cell surface. It carries out the reaction 4 Fe(2+) + O2 + 4 H(+) = 4 Fe(3+) + 2 H2O. A nucleoid-associated protein (NAP) that plays a role in local chromosome architecture and chromosome compactation. Required for biofilm formation, stress survival and possibly in cell wall assembly, probably influences transcription. RNase E and HupB jointly contribute to cellular adaptation to changing growth conditions and survival during antibiotic treatment and in the host. Functionally, binds Fe(3+) but not Fe(2+). Has ferroxidase activity, converts Fe(2+) into Fe(3+) and in the presence of H(2)O(2) prevents the generation of hydroxyl radicals (the Fenton reaction). Protects DNA from damage in the presence of FeSO(4) and H(2)O(2). May function in iron storage. Its function is as follows. May be involved in entry into human Schwann cells. In Mycobacterium leprae (strain TN), this protein is DNA-binding protein HupB.